Reading from the N-terminus, the 214-residue chain is 3,4-dihydroxy-2-butanone 4-phosphate synthase (214 aa).

D-ribulose 5-phosphate contacts are provided by residues 37–38, aspartate 42, 150–154, and glutamate 174; these read RE and RPGHT. Glutamate 38 serves as a coordination point for Mg(2+). Mg(2+) is bound at residue histidine 153.

This sequence belongs to the DHBP synthase family. In terms of assembly, homodimer. Mg(2+) serves as cofactor. Requires Mn(2+) as cofactor.

The enzyme catalyses D-ribulose 5-phosphate = (2S)-2-hydroxy-3-oxobutyl phosphate + formate + H(+). Its pathway is cofactor biosynthesis; riboflavin biosynthesis; 2-hydroxy-3-oxobutyl phosphate from D-ribulose 5-phosphate: step 1/1. Functionally, catalyzes the conversion of D-ribulose 5-phosphate to formate and 3,4-dihydroxy-2-butanone 4-phosphate. The protein is 3,4-dihydroxy-2-butanone 4-phosphate synthase of Mannheimia succiniciproducens (strain KCTC 0769BP / MBEL55E).